We begin with the raw amino-acid sequence, 503 residues long: 2-isopropylmalate synthase (503 aa).

Asp-1, His-189, His-191, and Asn-225 together coordinate Mn(2+). The 254-residue stretch at 1–254 (DGEQALQASL…STNINHKEIY (254 aa)) folds into the Pyruvate carboxyltransferase domain. Residues 379 to 503 (SLKFFSVQSI…NKNLKNLKKQ (125 aa)) are regulatory domain.

It belongs to the alpha-IPM synthase/homocitrate synthase family. LeuA type 1 subfamily. In terms of assembly, homodimer. It depends on Mn(2+) as a cofactor.

The protein resides in the cytoplasm. It carries out the reaction 3-methyl-2-oxobutanoate + acetyl-CoA + H2O = (2S)-2-isopropylmalate + CoA + H(+). It functions in the pathway amino-acid biosynthesis; L-leucine biosynthesis; L-leucine from 3-methyl-2-oxobutanoate: step 1/4. Functionally, catalyzes the condensation of the acetyl group of acetyl-CoA with 3-methyl-2-oxobutanoate (2-ketoisovalerate) to form 3-carboxy-3-hydroxy-4-methylpentanoate (2-isopropylmalate). The chain is 2-isopropylmalate synthase from Buchnera aphidicola subsp. Uroleucon ambrosiae.